The following is a 432-amino-acid chain: Cyclic 2,3-diphosphoglycerate synthetase (432 aa).

Belongs to the cyclic 2,3-diphosphoglycerate synthetase family.

It localises to the cytoplasm. It carries out the reaction (2R)-2,3-bisphosphoglycerate + ATP + H(+) = cyclic (2R)-2,3-bisphosphoglycerate + ADP + phosphate. In terms of biological role, catalyzes the formation of cyclic 2,3-diphosphoglycerate (cDPG) by formation of an intramolecular phosphoanhydride bond at the expense of ATP. This is Cyclic 2,3-diphosphoglycerate synthetase from Thermococcus onnurineus (strain NA1).